We begin with the raw amino-acid sequence, 302 residues long: Recombination-associated protein RdgC (302 aa).

The protein belongs to the RdgC family.

The protein localises to the cytoplasm. The protein resides in the nucleoid. Its function is as follows. May be involved in recombination. The polypeptide is Recombination-associated protein RdgC (Haemophilus influenzae (strain PittGG)).